The sequence spans 199 residues: Probable nicotinate-nucleotide adenylyltransferase (199 aa).

The protein belongs to the NadD family.

The catalysed reaction is nicotinate beta-D-ribonucleotide + ATP + H(+) = deamido-NAD(+) + diphosphate. Its pathway is cofactor biosynthesis; NAD(+) biosynthesis; deamido-NAD(+) from nicotinate D-ribonucleotide: step 1/1. Catalyzes the reversible adenylation of nicotinate mononucleotide (NaMN) to nicotinic acid adenine dinucleotide (NaAD). This chain is Probable nicotinate-nucleotide adenylyltransferase, found in Corynebacterium jeikeium (strain K411).